A 514-amino-acid polypeptide reads, in one-letter code: Polygalacturonase (514 aa).

An N-terminal signal peptide occupies residues 1-22 (MGMKFMAAVAFLALQLIVMAAA). A propeptide spanning residues 23–50 (EDQSAQIMLDSDIEQYLRSNRSLKKLVH) is cleaved from the precursor. 6 PbH1 repeats span residues 214-240 (CEGVKIQGLKIKAPRDSPNTDGIDIFA), 241-262 (SKRFHIEKCVIGTGDDCIAIGT), 264-284 (SSNITIKDLICGPGHGISIGS), 294-315 (VSHVHVNRAKFIDTQNGLRIKT), 323-344 (ASYITYENVEMINSENPILINQ), and 357-384 (RSAVQIQGVTYKNIHGTSATAAAIQLMC). The active-site Proton donor is Asp-255. Residue Asn-266 is glycosylated (N-linked (GlcNAc...) asparagine). His-278 is a catalytic residue. Asn-397 carries N-linked (GlcNAc...) asparagine glycosylation.

Belongs to the glycosyl hydrolase 28 family.

The protein resides in the secreted. The protein localises to the cell wall. The enzyme catalyses (1,4-alpha-D-galacturonosyl)n+m + H2O = (1,4-alpha-D-galacturonosyl)n + (1,4-alpha-D-galacturonosyl)m.. This chain is Polygalacturonase, found in Chamaecyparis obtusa (Hinoki false-cypress).